Here is a 158-residue protein sequence, read N- to C-terminus: NAD(P)H-quinone oxidoreductase subunit J, chloroplastic (158 aa).

It belongs to the complex I 30 kDa subunit family. As to quaternary structure, NDH is composed of at least 16 different subunits, 5 of which are encoded in the nucleus.

Its subcellular location is the plastid. It localises to the chloroplast thylakoid membrane. The catalysed reaction is a plastoquinone + NADH + (n+1) H(+)(in) = a plastoquinol + NAD(+) + n H(+)(out). The enzyme catalyses a plastoquinone + NADPH + (n+1) H(+)(in) = a plastoquinol + NADP(+) + n H(+)(out). NDH shuttles electrons from NAD(P)H:plastoquinone, via FMN and iron-sulfur (Fe-S) centers, to quinones in the photosynthetic chain and possibly in a chloroplast respiratory chain. The immediate electron acceptor for the enzyme in this species is believed to be plastoquinone. Couples the redox reaction to proton translocation, and thus conserves the redox energy in a proton gradient. The chain is NAD(P)H-quinone oxidoreductase subunit J, chloroplastic from Jasminum nudiflorum (Winter jasmine).